Here is a 205-residue protein sequence, read N- to C-terminus: Probable molybdenum cofactor guanylyltransferase (205 aa).

GTP-binding positions include 10 to 12 (LAG), Lys-22, Asp-69, and Asp-100. A Mg(2+)-binding site is contributed by Asp-100.

Belongs to the MobA family. Mg(2+) is required as a cofactor.

The protein resides in the cytoplasm. It catalyses the reaction Mo-molybdopterin + GTP + H(+) = Mo-molybdopterin guanine dinucleotide + diphosphate. In terms of biological role, transfers a GMP moiety from GTP to Mo-molybdopterin (Mo-MPT) cofactor (Moco or molybdenum cofactor) to form Mo-molybdopterin guanine dinucleotide (Mo-MGD) cofactor. This is Probable molybdenum cofactor guanylyltransferase from Natranaerobius thermophilus (strain ATCC BAA-1301 / DSM 18059 / JW/NM-WN-LF).